Reading from the N-terminus, the 119-residue chain is DNA-binding protein MMP0157 (119 aa).

The span at 1–12 (MNPEEIRQRRLQ) shows a compositional bias: basic and acidic residues. A disordered region spans residues 1–35 (MNPEEIRQRRLQEMQAKAQAQGAANDPEAQRQMQE).

This sequence belongs to the PDCD5 family.

The protein is DNA-binding protein MMP0157 of Methanococcus maripaludis (strain DSM 14266 / JCM 13030 / NBRC 101832 / S2 / LL).